Reading from the N-terminus, the 385-residue chain is Serine/threonine-protein kinase 52 (385 aa).

Residues 82–356 (LIIKTVLARG…PEMDEVVPML (275 aa)) form the Protein kinase domain. Residues 88 to 96 (LARGTFGTV) and lysine 109 each bind ATP. Aspartate 227 acts as the Proton acceptor in catalysis.

This sequence belongs to the protein kinase superfamily. Ser/Thr protein kinase family. In terms of assembly, binds to CBC1. Associates with PHOT1, PHOT2, BLUS1 and PM H(+)-ATPase (e.g. AHA1). In terms of processing, autophosphorylated. Phosphorylated by HT1 in response to low CO(2) concentrations. As to expression, expressed in guard cells.

The protein resides in the cytoplasm. Its subcellular location is the cytosol. It catalyses the reaction L-seryl-[protein] + ATP = O-phospho-L-seryl-[protein] + ADP + H(+). The catalysed reaction is L-threonyl-[protein] + ATP = O-phospho-L-threonyl-[protein] + ADP + H(+). Its function is as follows. Serine/threonine protein kinase that phosphorylates proteins on serine and threonine residues. Collectively with CBC1, acts as a negative regulator of stomatal opening, probably via the inhibition of plasma membrane-type ATPases (AHA1 and AHA2) activity in guard cells, but in an abscisic acid (ABA)-independent manner. However, at low concentrations of CO(2), together with CBC1, stimulates stomatal opening via the inhibition of S-type anion channels in response to blue light (BL) and red light (RL), thus being a key component to maximize photosynthesis in the light under low CO(2) conditions. Required for temperature decrease in leaves. Downstream target of HIGH LEAF TEMPERATURE1 (HT1) during low CO(2)-induced stomatal opening. This Arabidopsis thaliana (Mouse-ear cress) protein is Serine/threonine-protein kinase 52.